A 299-amino-acid chain; its full sequence is UTP--glucose-1-phosphate uridylyltransferase 1 (299 aa).

Belongs to the UDPGP type 2 family.

It catalyses the reaction alpha-D-glucose 1-phosphate + UTP + H(+) = UDP-alpha-D-glucose + diphosphate. The protein operates within carbohydrate metabolism; nucleotide-sugar metabolism. This Streptococcus pyogenes serotype M6 (strain ATCC BAA-946 / MGAS10394) protein is UTP--glucose-1-phosphate uridylyltransferase 1 (hasC1).